A 189-amino-acid polypeptide reads, in one-letter code: DAN domain family member 5 (189 aa).

Residues 1 to 22 (MLLGQLSTLLCLLSGALPTGSG) form the signal peptide. Asn38 is a glycosylation site (N-linked (GlcNAc...) asparagine). Disulfide bonds link Cys101/Cys148, Cys115/Cys162, Cys125/Cys183, and Cys129/Cys185. Residues 101–186 (CKAVPFVQVF…TMLIEGCHCS (86 aa)) enclose the CTCK domain.

It belongs to the DAN family. As to expression, expressed in the retina, in inner segments of photoreceptors, at or close to the outer plexiform layer and in the ganglion cell layer (at protein level).

Its subcellular location is the secreted. Antagonist of the extracellular signaling protein NODAL, which is required for correct left-right patterning during embryonic development. Antagonist of BMP and TGF-beta signaling. Independently of its role in left-right axis establishment, plays a role during heart development, possibly through the regulation of TGF-beta/Nodal signaling pathway. Displays anti-angiogenic activity by inhibiting endothelial sprouting, migration, and proliferation. Once internalized by endothelial cells, may alter their redox and glycolytic balance. In Homo sapiens (Human), this protein is DAN domain family member 5 (DAND5).